The sequence spans 203 residues: MNVLIVYYSMYGHIHRMAEAVAEGVREVPGAEAVLRRVPETLSPDVLEKMGAVEPQKAFAHIPVATVDELASADAIIFGTPTRFGNMCGQMRQFLDATGGLWVKGSLVGKAAGVFTSSATQHGGQESTILTFHTFLLHQGMVIVGLPYAFAGQTRIDEITGGSPYGASTIAGGQGERLPSENDLAGARFQGRYVAQIAAKLNG.

The Flavodoxin-like domain occupies 3 to 194; sequence VLIVYYSMYG…AGARFQGRYV (192 aa). FMN is bound by residues 9 to 14 and 82 to 84; these read SMYGHI and TRF. Y11 contacts NAD(+). W102 is a binding site for substrate. Residues 117–123 and H138 contribute to the FMN site; that span reads SSATQHG.

Belongs to the WrbA family. Requires FMN as cofactor.

The enzyme catalyses a quinone + NADH + H(+) = a quinol + NAD(+). The catalysed reaction is a quinone + NADPH + H(+) = a quinol + NADP(+). This chain is NAD(P)H dehydrogenase (quinone), found in Geobacter sulfurreducens (strain ATCC 51573 / DSM 12127 / PCA).